The sequence spans 338 residues: Glutamyl-tRNA reductase (338 aa).

Substrate-binding positions include 50–53, Ser-102, 107–109, and Gln-113; these read TCHR and ETE. Residue Cys-51 is the Nucleophile of the active site. Residue 181–186 coordinates NADP(+); it reads GYSEIN.

This sequence belongs to the glutamyl-tRNA reductase family. In terms of assembly, homodimer.

The enzyme catalyses (S)-4-amino-5-oxopentanoate + tRNA(Glu) + NADP(+) = L-glutamyl-tRNA(Glu) + NADPH + H(+). Its pathway is porphyrin-containing compound metabolism; protoporphyrin-IX biosynthesis; 5-aminolevulinate from L-glutamyl-tRNA(Glu): step 1/2. Functionally, catalyzes the NADPH-dependent reduction of glutamyl-tRNA(Glu) to glutamate 1-semialdehyde (GSA). This is Glutamyl-tRNA reductase from Chlamydia abortus (strain DSM 27085 / S26/3) (Chlamydophila abortus).